A 266-amino-acid polypeptide reads, in one-letter code: Streptomycin 3''-kinase (266 aa).

The active-site Proton acceptor is aspartate 154.

Belongs to the aminoglycoside phosphotransferase family.

The enzyme catalyses streptomycin + ATP = streptomycin 3''-phosphate + ADP + H(+). Its function is as follows. The aminoglycoside phosphotransferases achieve inactivation of their antibiotic substrates by phosphorylation. The protein is Streptomycin 3''-kinase (str) of Klebsiella pneumoniae.